A 509-amino-acid chain; its full sequence is Heat shock 70 kDa protein 14-A (509 aa).

Belongs to the heat shock protein 70 family. Component of ribosome-associated complex (RAC).

The protein resides in the cytoplasm. It is found in the cytosol. In terms of biological role, component of the ribosome-associated complex (RAC), a complex involved in folding or maintaining nascent polypeptides in a folding-competent state. The chain is Heat shock 70 kDa protein 14-A (hspa14-a) from Xenopus laevis (African clawed frog).